The primary structure comprises 152 residues: UPF0225 protein YchJ (152 aa).

It belongs to the UPF0225 family.

The polypeptide is UPF0225 protein YchJ (Escherichia coli O81 (strain ED1a)).